Reading from the N-terminus, the 146-residue chain is Hemoglobin subunit beta-0 (146 aa).

The Globin domain occupies 2–146; that stretch reads EWTDFERATI…VVSSLGRQYH (145 aa). 2 residues coordinate heme b: H63 and H92.

This sequence belongs to the globin family. As to quaternary structure, heterotetramer of two alpha chains and two beta chains. In terms of tissue distribution, red blood cells.

Its function is as follows. Involved in oxygen transport from gills to the various peripheral tissues. This Pagothenia borchgrevinki (Bald rockcod) protein is Hemoglobin subunit beta-0 (hbb0).